A 242-amino-acid chain; its full sequence is ATP synthase subunit a (242 aa).

A run of 6 helical transmembrane segments spans residues 29 to 49, 84 to 104, 114 to 134, 140 to 160, 189 to 209, and 210 to 230; these read SAAYMLLASVLALTYFYLAFS, FVPVIFTLFVFILFCNLFGMI, IIITFALAILVFLMVTIVGFV, FLSLFLPHGTPLWLAPLMIII, VIASFVITLMIYLKFLPIPLM, and VILIGFEIFVAILQAYIFTIL.

The protein belongs to the ATPase A chain family. F-type ATPases have 2 components, CF(1) - the catalytic core - and CF(0) - the membrane proton channel. CF(1) has five subunits: alpha(3), beta(3), gamma(1), delta(1), epsilon(1). CF(0) has three main subunits: a(1), b(2) and c(9-12). The alpha and beta chains form an alternating ring which encloses part of the gamma chain. CF(1) is attached to CF(0) by a central stalk formed by the gamma and epsilon chains, while a peripheral stalk is formed by the delta and b chains.

The protein localises to the cell inner membrane. Key component of the proton channel; it plays a direct role in the translocation of protons across the membrane. The sequence is that of ATP synthase subunit a from Rickettsia bellii (strain OSU 85-389).